The primary structure comprises 128 residues: MSKTIVLSVGEATRTLTEIQSTADRQIFEEKVGPLVGRLRLTASLRQNGAKTAYRVNLKLDQADVVDCSTSVCGELPKVRYTQVWSHDVTIVANSTEASRKSLYDLTKSLVATSQVEDLVVNLVPLGR.

Arg-40, Arg-46, Ala-53, Arg-55, Lys-59, Asp-61, Val-84, Ser-86, and Thr-90 together coordinate RNA.

Belongs to the Leviviricetes capsid protein family. As to quaternary structure, homodimer. The dimers in the capsid are covalently linked with disulfide bridges. The homodimers binds to the viral RNA via an operator hairpin, but also to many other RNA sequences in the viral genome; this interaction probably shifts the virus from the replicative to the assembly phase and ensures specific encapsidation of the viral genome.

Its subcellular location is the virion. Functionally, capsid protein self-assembles to form an icosahedral capsid with a T=3 symmetry, about 26 nm in diameter, and consisting of 89 capsid proteins dimers (178 capsid proteins). Involved in viral genome encapsidation through the interaction between a capsid protein dimer and the multiple packaging signals present in the RNA genome. Its function is as follows. Acts as a translational repressor of viral replicase synthesis late in infection. This latter function is the result of capsid protein interaction with an RNA hairpin which contains the replicase ribosome-binding site. This Pseudomonas aeruginosa (Bacteriophage PP7) protein is Capsid protein.